Here is a 337-residue protein sequence, read N- to C-terminus: 1-aminocyclopropane-1-carboxylate deaminase (337 aa).

Position 50 is an N6-(pyridoxal phosphate)lysine (Lys-50). Ser-77 (nucleophile) is an active-site residue.

It belongs to the ACC deaminase/D-cysteine desulfhydrase family. As to quaternary structure, homotrimer. Pyridoxal 5'-phosphate serves as cofactor.

It carries out the reaction 1-aminocyclopropane-1-carboxylate + H2O = 2-oxobutanoate + NH4(+). Functionally, catalyzes a cyclopropane ring-opening reaction, the irreversible conversion of 1-aminocyclopropane-1-carboxylate (ACC) to ammonia and alpha-ketobutyrate. Allows growth on ACC as a nitrogen source. The sequence is that of 1-aminocyclopropane-1-carboxylate deaminase from Methylobacterium nodulans (strain LMG 21967 / CNCM I-2342 / ORS 2060).